We begin with the raw amino-acid sequence, 333 residues long: MIERIWSGKSWCYLLLLPFSWLYGAISLFRRFAYKQGWLSSWKSPVPVVVVGNLTAGGNGKTPVVIWLVEQLKAQGFKPAVVSRGYGGKSDQYPLLLSPETQPAVAGDEPVLIYHRTGVPVAVAPSRSDAVKALLAQYDLDIIITDDGLQHYALQRDYEIVVIDGQRRFGNGWWLPAGPMRERAHRLDSVNAVIVNGGDCQANEIAMSLEGEIAVNLKTGEKKAITELGNAVAMAGIGHPPRFFNSLQDKGVKLIATKAFNDHSEYTLQELQILTPHQEPLIMTEKDAVKCQHFAQNNWWYLPVSAVLEDLSVLNQVSQLVTTRKKLVYDLKQ.

Residue 55 to 62 (TAGGNGKT) coordinates ATP.

Belongs to the LpxK family.

It carries out the reaction a lipid A disaccharide + ATP = a lipid IVA + ADP + H(+). The protein operates within glycolipid biosynthesis; lipid IV(A) biosynthesis; lipid IV(A) from (3R)-3-hydroxytetradecanoyl-[acyl-carrier-protein] and UDP-N-acetyl-alpha-D-glucosamine: step 6/6. Functionally, transfers the gamma-phosphate of ATP to the 4'-position of a tetraacyldisaccharide 1-phosphate intermediate (termed DS-1-P) to form tetraacyldisaccharide 1,4'-bis-phosphate (lipid IVA). In Proteus mirabilis (strain HI4320), this protein is Tetraacyldisaccharide 4'-kinase.